The sequence spans 182 residues: Peptidoglycan recognition protein 1 (182 aa).

The N-terminal stretch at 1 to 18 is a signal peptide; that stretch reads MLFACALLALLGLATSCS. 3 disulfide bridges follow: Cys17-Cys141, Cys33-Cys78, and Cys54-Cys60. An N-acetylmuramoyl-L-alanine amidase domain is found at 39 to 167; it reads HPVRYVVISH…RDVQSTLSPG (129 aa).

This sequence belongs to the N-acetylmuramoyl-L-alanine amidase 2 family. In terms of assembly, homodimer; disulfide-linked. Interacts with HSPA1A; this interaction forms a cytotoxic complex that is released by lymphokine-activated killer cells. Interacts with HSPBP1; this interaction blocks the cytotoxic activity of the PGLYRP1-HSPA1A complex. As to expression, strongly expressed in spleen and lung. Also detected in brain and thymus. In the lung, expressed in the intraalveolar space, in the brain, expressed in the Purkinje cells of the cerebellum and in certain layers of neurons in the hippocampus. Also detected in cells filling the space within the intestinal villus.

The protein localises to the cytoplasm. It is found in the secreted. Innate immunity protein that plays several important functions in antimicrobial and antitumor defense systems. Acts as a pattern receptor that binds to murein peptidoglycans (PGN) of Gram-positive bacteria and thus provides bactericidal activity. Forms an equimolar complex with heat shock protein HSPA1A and induces programmed cell death through apoptosis and necroptosis in tumor cell lines by activating the TNFR1 receptor on the target cell membrane. In addition, acts in complex with the Ca(2+)-binding protein S100A4 as a chemoattractant able to induce lymphocyte movement. Mechanistically, this complex acts as a ligand of the chemotactic receptors CCR5 and CXCR3 which are present on the cells of the immune system. Also promotes the activation of lymphocytes that become able to kill virus-infected cells as well as tumor cells by modulating the spectrum of their target-cell specificity. Induction of cytotoxicity on monocyte surface requires interaction with TREM1 receptor. The chain is Peptidoglycan recognition protein 1 (Pglyrp1) from Mus musculus (Mouse).